The following is a 106-amino-acid chain: YcgL domain-containing protein PsycPRwf_1721 (106 aa).

The YcgL domain maps to 1–94; sequence MHCDIYKFPK…PSDVLLAQAQ (94 aa).

The chain is YcgL domain-containing protein PsycPRwf_1721 from Psychrobacter sp. (strain PRwf-1).